The primary structure comprises 232 residues: MEYPTPLTPARMVQRYKRFLSDVTLADGTQVTAHCANSGSMRGLVHVGEPVYLSHSDNPKRKLAWTLELVCDGGALVGVNTGLANALVAEALQQDRIPPLQGFAHFRREVPYQDSRLDFCLTAPAGALTYVEVKSVTLRLTDEAAFPDAVTKRGAKHLAALRHAVKAGHRGVILFIVQRSDLDHFRPAHEIDPGYAQTLQWAISEGVEILVYACALTTASIYVERPLSYTLG.

It belongs to the SfsA family.

The sequence is that of Sugar fermentation stimulation protein homolog from Magnetococcus marinus (strain ATCC BAA-1437 / JCM 17883 / MC-1).